We begin with the raw amino-acid sequence, 239 residues long: Orotidine 5'-phosphate decarboxylase (239 aa).

Residues Asp15, Lys37, 64-73 (DLKYHDIPNT), Thr126, Arg187, Gln196, Gly216, and Arg217 each bind substrate. Residue Lys66 is the Proton donor of the active site.

It belongs to the OMP decarboxylase family. Type 1 subfamily. In terms of assembly, homodimer.

It carries out the reaction orotidine 5'-phosphate + H(+) = UMP + CO2. Its pathway is pyrimidine metabolism; UMP biosynthesis via de novo pathway; UMP from orotate: step 2/2. Catalyzes the decarboxylation of orotidine 5'-monophosphate (OMP) to uridine 5'-monophosphate (UMP). The sequence is that of Orotidine 5'-phosphate decarboxylase from Geotalea daltonii (strain DSM 22248 / JCM 15807 / FRC-32) (Geobacter daltonii).